Consider the following 422-residue polypeptide: Dihydrolipoyllysine-residue succinyltransferase component of 2-oxoglutarate dehydrogenase complex (422 aa).

The 76-residue stretch at 1-76 folds into the Lipoyl-binding domain; the sequence is MPEVKVPELA…EVGQAIAIIG (76 aa). K42 bears the N6-lipoyllysine mark. Residues 77-185 are disordered; it reads EGSGNASKEN…SAKEEKKYNQ (109 aa). Polar residues-rich tracts occupy residues 80–94 and 116–130; these read GNAS…TPQQ and NQAN…NATP. The Peripheral subunit-binding (PSBD) domain occupies 127–163; that stretch reads NATPSARRYARENGVNLAEVSPKTNDVVRKEDIDKKQ. Positions 152-163 are enriched in basic and acidic residues; the sequence is DVVRKEDIDKKQ. A compositionally biased stretch (low complexity) spans 164 to 176; it reads QAPASTQTTQQAS. Residues H393 and D397 contribute to the active site.

It belongs to the 2-oxoacid dehydrogenase family. In terms of assembly, forms a 24-polypeptide structural core with octahedral symmetry. Part of the 2-oxoglutarate dehydrogenase (OGDH) complex composed of E1 (2-oxoglutarate dehydrogenase), E2 (dihydrolipoamide succinyltransferase) and E3 (dihydrolipoamide dehydrogenase); the complex contains multiple copies of the three enzymatic components (E1, E2 and E3). It depends on (R)-lipoate as a cofactor.

It carries out the reaction N(6)-[(R)-dihydrolipoyl]-L-lysyl-[protein] + succinyl-CoA = N(6)-[(R)-S(8)-succinyldihydrolipoyl]-L-lysyl-[protein] + CoA. Its pathway is amino-acid degradation; L-lysine degradation via saccharopine pathway; glutaryl-CoA from L-lysine: step 6/6. Functionally, E2 component of the 2-oxoglutarate dehydrogenase (OGDH) complex which catalyzes the second step in the conversion of 2-oxoglutarate to succinyl-CoA and CO(2). This Staphylococcus aureus (strain USA300) protein is Dihydrolipoyllysine-residue succinyltransferase component of 2-oxoglutarate dehydrogenase complex (odhB).